A 374-amino-acid chain; its full sequence is uncharacterized protein (374 aa).

A signal peptide spans 1-26 (MNNLIKAYAAGVMSAAFLFGSEGRVR).

This is an uncharacterized protein from Treponema pallidum (strain Nichols).